Reading from the N-terminus, the 615-residue chain is Aldehyde oxidase GLOX1 (615 aa).

A signal peptide spans methionine 1–alanine 25. Asparagine 35 is a glycosylation site (N-linked (GlcNAc...) asparagine). Residues proline 70–glycine 89 are disordered. Residues lysine 72–glycine 82 are compositionally biased toward basic residues. N-linked (GlcNAc...) asparagine glycosylation is found at asparagine 187 and asparagine 297.

The protein localises to the secreted. The catalysed reaction is an aldehyde + O2 + H2O = a carboxylate + H2O2 + H(+). In terms of biological role, catalyzes the oxidation of aldehydes to the corresponding carboxylate by coupling the reaction to the reduction of dioxygen to hydrogen peroxide. Substrates include glyoxal and other aldehydes. May be regulated by the transcription factor MYB80 during anther development and play a role in tapetum and pollen development. In Arabidopsis thaliana (Mouse-ear cress), this protein is Aldehyde oxidase GLOX1.